The sequence spans 1030 residues: Alpha-L-rhamnosidase (1030 aa).

A carbohydrate-binding module-67 (CBM67) region spans residues 133-297; the sequence is PSLEGSSWIW…GAGPWGRVAP (165 aa). Ca(2+) contacts are provided by aspartate 179 and asparagine 180. Alpha-L-rhamnose contacts are provided by residues 179–180 and tryptophan 203; that span reads DN. Asparagine 228 and proline 233 together coordinate Ca(2+). Alpha-L-rhamnose-binding positions include aspartate 630, 634–636, aspartate 643, and tryptophan 695; that span reads RDE. The active-site Proton donor is glutamate 636. The active-site Proton acceptor is the glutamate 895. Histidine 916 contacts alpha-L-rhamnose.

This sequence belongs to the glycosyl hydrolase 78 family.

The enzyme catalyses Hydrolysis of terminal non-reducing alpha-L-rhamnose residues in alpha-L-rhamnosides.. Alpha-L-rhamnosidase which is able to degrade p-nitrophenyl-alpha-L-rhamnopyranoside (PNP-Rha) in vitro. Releases L-rhamnose from citrus flavonoids such as naringin, rutin and hesperidin, and the arabinogalactan-protein (AGP) gum arabic. AGPs are a family of proteoglycans that are localized on the cell surfaces of higher plants. Cleaves both the alpha-1,6 and the alpha-1,2-linked rhamnosyl residues. The polypeptide is Alpha-L-rhamnosidase (Streptomyces avermitilis (strain ATCC 31267 / DSM 46492 / JCM 5070 / NBRC 14893 / NCIMB 12804 / NRRL 8165 / MA-4680)).